The chain runs to 108 residues: Protein S100-A15A (108 aa).

The EF-hand domain maps to 53–88 (KEPYYVTELFQATDKNRDNQICFDEFLYILGKLVKD). Positions 66, 68, 70, 72, and 77 each coordinate Ca(2+).

Belongs to the S-100 family.

This Gorilla gorilla gorilla (Western lowland gorilla) protein is Protein S100-A15A (S100A15A).